A 353-amino-acid chain; its full sequence is S-adenosylmethionine:tRNA ribosyltransferase-isomerase (353 aa).

Belongs to the QueA family. In terms of assembly, monomer.

Its subcellular location is the cytoplasm. It carries out the reaction 7-aminomethyl-7-carbaguanosine(34) in tRNA + S-adenosyl-L-methionine = epoxyqueuosine(34) in tRNA + adenine + L-methionine + 2 H(+). It participates in tRNA modification; tRNA-queuosine biosynthesis. Functionally, transfers and isomerizes the ribose moiety from AdoMet to the 7-aminomethyl group of 7-deazaguanine (preQ1-tRNA) to give epoxyqueuosine (oQ-tRNA). This Rickettsia bellii (strain OSU 85-389) protein is S-adenosylmethionine:tRNA ribosyltransferase-isomerase.